The following is a 306-amino-acid chain: Ornithine carbamoyltransferase (306 aa).

Carbamoyl phosphate is bound by residues 50–53, Gln77, Arg101, and 128–131; these read STRT and HPCQ. Residues Asn160, Asp224, and 228 to 229 contribute to the L-ornithine site; that span reads SM. Carbamoyl phosphate is bound by residues 264 to 265 and Arg292; that span reads CL.

The protein belongs to the aspartate/ornithine carbamoyltransferase superfamily. OTCase family.

It localises to the cytoplasm. The enzyme catalyses carbamoyl phosphate + L-ornithine = L-citrulline + phosphate + H(+). The protein operates within amino-acid biosynthesis; L-arginine biosynthesis; L-arginine from L-ornithine and carbamoyl phosphate: step 1/3. Its function is as follows. Reversibly catalyzes the transfer of the carbamoyl group from carbamoyl phosphate (CP) to the N(epsilon) atom of ornithine (ORN) to produce L-citrulline. The polypeptide is Ornithine carbamoyltransferase (Mycobacterium leprae (strain TN)).